Reading from the N-terminus, the 457-residue chain is MSLATLQGQSLDFAVKHSLDDLLKNPVRFRPAVVSSPSVPEGTYTVLNNPKQSTVSRKSFSAPTSPTRNKRSGSSSQEYKKSSGTRGDGANDFVDEDPAFIPPARILFPEEKLSMEWDNIMPNAPGLVNLGNTCFMNSVLQLMTQTPPLVQYLLSGQHSLSCRMNACVLCRMEQHVARAYPNKGTKRASAFKPSGIQSMLKVISSHFRPYRQEDAHEFMRYLVDAWQKSCLQNHKNLDHPSRETSVVHRIFGGYLRQQILCSVCKKPSNTYQALLDLSVDAKGSSLADSLKHFVHAEKLTKQNKYRCENCKQLVDASKQMTIYRAPNILTIHFKRFTFNGFQSSKISKQISYPESFNLGPYMSDPNCSCWYELIGVLVHAGGSTRSGHYYSFCKSSNGVWLKFDDDFVSNSSIDRVLNQQAYILQYKRKSTSSSKHKLNTENTVTKTSNKKRRKISF.

The disordered stretch occupies residues 34–97 (VSSPSVPEGT…DGANDFVDED (64 aa)). A compositionally biased stretch (polar residues) spans 45–67 (TVLNNPKQSTVSRKSFSAPTSPT). Residue S61 is modified to Phosphoserine. Position 64 is a phosphothreonine (T64). S65 bears the Phosphoserine mark. Residues 125–429 (PGLVNLGNTC…QAYILQYKRK (305 aa)) form the USP domain. The Nucleophile role is filled by C134. The active-site Proton acceptor is H388. Residues 434–457 (SKHKLNTENTVTKTSNKKRRKISF) are disordered. Basic residues predominate over residues 448 to 457 (SNKKRRKISF).

Belongs to the peptidase C19 family.

It catalyses the reaction Thiol-dependent hydrolysis of ester, thioester, amide, peptide and isopeptide bonds formed by the C-terminal Gly of ubiquitin (a 76-residue protein attached to proteins as an intracellular targeting signal).. The protein is Probable ubiquitin carboxyl-terminal hydrolase 16 (ubp16) of Schizosaccharomyces pombe (strain 972 / ATCC 24843) (Fission yeast).